We begin with the raw amino-acid sequence, 162 residues long: Probable chemoreceptor glutamine deamidase CheD (162 aa).

This sequence belongs to the CheD family.

It catalyses the reaction L-glutaminyl-[protein] + H2O = L-glutamyl-[protein] + NH4(+). Its function is as follows. Probably deamidates glutamine residues to glutamate on methyl-accepting chemotaxis receptors (MCPs), playing an important role in chemotaxis. The sequence is that of Probable chemoreceptor glutamine deamidase CheD from Clostridium botulinum (strain Eklund 17B / Type B).